We begin with the raw amino-acid sequence, 368 residues long: DNA replication and repair protein RecF (368 aa).

ATP is bound at residue 30-37; the sequence is GNNAQGKT.

This sequence belongs to the RecF family.

The protein resides in the cytoplasm. In terms of biological role, the RecF protein is involved in DNA metabolism; it is required for DNA replication and normal SOS inducibility. RecF binds preferentially to single-stranded, linear DNA. It also seems to bind ATP. This chain is DNA replication and repair protein RecF, found in Streptococcus pyogenes serotype M6 (strain ATCC BAA-946 / MGAS10394).